The chain runs to 417 residues: UDP-N-acetylglucosamine 1-carboxyvinyltransferase (417 aa).

Phosphoenolpyruvate is bound at residue 22 to 23 (KN). Arg93 is a binding site for UDP-N-acetyl-alpha-D-glucosamine. Cys117 serves as the catalytic Proton donor. Cys117 carries the 2-(S-cysteinyl)pyruvic acid O-phosphothioketal modification. UDP-N-acetyl-alpha-D-glucosamine contacts are provided by residues 122–126 (RPVDQ), Asp304, and Ile326.

Belongs to the EPSP synthase family. MurA subfamily.

Its subcellular location is the cytoplasm. The enzyme catalyses phosphoenolpyruvate + UDP-N-acetyl-alpha-D-glucosamine = UDP-N-acetyl-3-O-(1-carboxyvinyl)-alpha-D-glucosamine + phosphate. It participates in cell wall biogenesis; peptidoglycan biosynthesis. Its function is as follows. Cell wall formation. Adds enolpyruvyl to UDP-N-acetylglucosamine. The chain is UDP-N-acetylglucosamine 1-carboxyvinyltransferase from Neisseria meningitidis serogroup B (strain ATCC BAA-335 / MC58).